The primary structure comprises 57 residues: U13-myrmicitoxin-Mri1a (57 aa).

Residues 1-23 (MKIIHVLLLVAVVAITMSPSIMA) form the signal peptide. The propeptide occupies 24–29 (ESVAEA). A Glutamic acid 1-amide modification is found at glutamate 56.

In terms of tissue distribution, expressed by the venom gland.

It is found in the secreted. Functionally, induces paralysis 1 hour after injection into insects (blowfly L.caesar) but does not appear to be lethal. This chain is U13-myrmicitoxin-Mri1a, found in Manica rubida (European giant red ant).